The sequence spans 337 residues: Pyruvate dehydrogenase E1 component subunit beta (337 aa).

Position 73 (glutamate 73) interacts with thiamine diphosphate.

Heterodimer of an alpha and a beta chain. Thiamine diphosphate serves as cofactor.

The catalysed reaction is N(6)-[(R)-lipoyl]-L-lysyl-[protein] + pyruvate + H(+) = N(6)-[(R)-S(8)-acetyldihydrolipoyl]-L-lysyl-[protein] + CO2. The pyruvate dehydrogenase complex catalyzes the overall conversion of pyruvate to acetyl-CoA and CO(2). It contains multiple copies of three enzymatic components: pyruvate dehydrogenase (E1), dihydrolipoamide acetyltransferase (E2) and lipoamide dehydrogenase (E3). This chain is Pyruvate dehydrogenase E1 component subunit beta (pdhB), found in Leifsonia xyli subsp. xyli (strain CTCB07).